Consider the following 345-residue polypeptide: D-alanine--D-alanine ligase (345 aa).

The region spanning 137-342 is the ATP-grasp domain; it reads KAAFSAAGLP…LEELVHQLLE (206 aa). 169 to 224 contacts ATP; it reads ETQLGYPCFIKPANLGSSVGISKATNRSELQAGLDLAASHDSRLLVEKGLQVRELE. Positions 295, 309, and 311 each coordinate Mg(2+).

Belongs to the D-alanine--D-alanine ligase family. It depends on Mg(2+) as a cofactor. Mn(2+) is required as a cofactor.

The protein resides in the cytoplasm. It catalyses the reaction 2 D-alanine + ATP = D-alanyl-D-alanine + ADP + phosphate + H(+). It participates in cell wall biogenesis; peptidoglycan biosynthesis. Cell wall formation. This Synechococcus sp. (strain RCC307) protein is D-alanine--D-alanine ligase.